A 629-amino-acid polypeptide reads, in one-letter code: Dapper homolog 3 (629 aa).

Phosphoserine is present on Ser6. Disordered regions lie at residues 50–76 (PGMG…RRAA) and 105–574 (GGLE…GGLV). Residues 56–69 (EAEDEEDADEDEDA) show a composition bias toward acidic residues. Residues 63-87 (ADEDEDAAAARRAAAALEEQLEALP) adopt a coiled-coil conformation. The span at 105 to 150 (GGLEQESGRSSGFYEDPSSTGGPDSPPSTFCGDSGFSGSSSYGRLG) shows a compositional bias: low complexity. 2 positions are modified to phosphoserine: Ser165 and Ser239. Arg258 carries the omega-N-methylarginine modification. A compositionally biased stretch (basic and acidic residues) spans 301-311 (PAREPSLERVG). Low complexity predominate over residues 316–335 (SPAALSRAWASSWESEAAPE). Over residues 336-348 (PAAPPAAPSPPDS) the composition is skewed to pro residues. Phosphoserine occurs at positions 426 and 478. The segment covering 525 to 535 (SAGRLGPLGRR) has biased composition (low complexity). Gly residues predominate over residues 536-546 (GPAGGVGGGYG). A compositionally biased stretch (low complexity) spans 547–568 (ESESSASEGESPAFSSASSDSD). A PDZ-binding motif is present at residues 626–629 (MTTV).

It belongs to the dapper family. In terms of assembly, can form homodimers and heterodimers with DACT1 or DACT3. Interacts with CSNK1D, PKA catalytic subunit, PKC-type kinase, DVL1, DVL3, VANGL1, VANGL2 and CTNND1. Interacts with DVL2.

In terms of biological role, may be involved in regulation of intracellular signaling pathways during development. Specifically thought to play a role in canonical and/or non-canonical Wnt signaling pathways through interaction with DSH (Dishevelled) family proteins. The protein is Dapper homolog 3 (DACT3) of Homo sapiens (Human).